Here is a 317-residue protein sequence, read N- to C-terminus: Olfactory receptor 2F1 (317 aa).

The Extracellular segment spans residues 1–24; that stretch reads MGTDNQTWVSEFILLGLSSDWDTR. N-linked (GlcNAc...) asparagine glycosylation is present at Asn-5. A helical membrane pass occupies residues 25–48; sequence VSLFVLFLVMYVVTVLGNCLIVLL. Over 49–57 the chain is Cytoplasmic; that stretch reads IRLDSRLHT. The chain crosses the membrane as a helical span at residues 58-79; sequence PMYFFLTNLSLVDVSYATSVVP. Topologically, residues 80–100 are extracellular; that stretch reads QLLAHFLAEHKAIPFQSCAAQ. A disulfide bridge links Cys-97 with Cys-189. A helical membrane pass occupies residues 101–120; the sequence is LFFSLALGGIEFVLLAVMAY. Over 121–139 the chain is Cytoplasmic; it reads DRYVAVCDALRYSAIMHGG. The chain crosses the membrane as a helical span at residues 140–160; that stretch reads LCARLAITSWVSGFISSPVQT. Topologically, residues 161 to 200 are extracellular; the sequence is AITFQLPMCRNKFIDHISCELLAVVRLACVDTSSNEVTIM. A helical membrane pass occupies residues 201 to 222; sequence VSSIVLLMTPFCLVLLSYIQII. At 223 to 236 the chain is on the cytoplasmic side; sequence STILKIQSREGRKK. The helical transmembrane segment at 237 to 261 threads the bilayer; it reads AFHTCASHLTVVALCYGVAIFTYIQ. The Extracellular portion of the chain corresponds to 262 to 272; it reads PHSSPSVLQEK. Residues 273–292 form a helical membrane-spanning segment; sequence LFSVFYAILTPMLNPMIYSL. Over 293–317 the chain is Cytoplasmic; sequence RNKEVKGAWQKLLWKFSGLTSKLAT.

Belongs to the G-protein coupled receptor 1 family.

It is found in the cell membrane. Functionally, odorant receptor. In Homo sapiens (Human), this protein is Olfactory receptor 2F1 (OR2F1).